The primary structure comprises 122 residues: MIQQESRLRVADNTGAKEILCIRVLGGSSRRYAGIGDVIVATVKDAIPGGNVKRGDVVKAVVVRTVKERRRPDGSYIKFDENAAVLIKADNDPRGTRIFGPVGRELRDKKFMKIVSLAPEVL.

This sequence belongs to the universal ribosomal protein uL14 family. As to quaternary structure, part of the 50S ribosomal subunit. Forms a cluster with proteins L3 and L19. In the 70S ribosome, L14 and L19 interact and together make contacts with the 16S rRNA in bridges B5 and B8.

Functionally, binds to 23S rRNA. Forms part of two intersubunit bridges in the 70S ribosome. In Nocardia farcinica (strain IFM 10152), this protein is Large ribosomal subunit protein uL14.